The following is a 53-amino-acid chain: Metallocarboxypeptidase inhibitor b (53 aa).

3 disulfides stabilise this stretch: Cys-9-Cys-23, Cys-15-Cys-51, and Cys-27-Cys-38. Ala-53 serves as a coordination point for Zn(2+).

Metallocarboxypeptidase inhibitor. Has an inhibitory effect on bovine CPA1 and porcine CPB1. Does not inhibit D.melanogaster svr (carboxypeptidase D). Shows no activity against serine proteases subtilisin or bovine trypsin, cysteine protease papain, and aspartyl protease porcine pepsin. In Nerita versicolor (Four-tooth nerite), this protein is Metallocarboxypeptidase inhibitor b.